The following is a 296-amino-acid chain: Putative mannose 6-phosphate receptor-like protein C530.09c (296 aa).

The signal sequence occupies residues 1–25 (MRLLTCLINVLAGLTLFSQFQRAFG). Over 26-206 (LTITRRGFKV…TVKKDSTLNP (181 aa)) the chain is Lumenal. One can recognise an MRH domain in the interval 42–197 (PFCALHHPNT…EWKTIHACPT (156 aa)). Cys44 and Cys87 form a disulfide bridge. Asn64, Asn81, Asn93, Asn96, and Asn143 each carry an N-linked (GlcNAc...) asparagine glycan. Disulfide bonds link Cys147/Cys183 and Cys163/Cys195. A helical membrane pass occupies residues 207 to 227 (VSVFLLFCAIAFLAYFVGGFV). The Cytoplasmic portion of the chain corresponds to 228-249 (YQRVVLNARGLRQIPNYEMWRS). A helical membrane pass occupies residues 250–270 (LFGFISDIVIILYSSILSILP). The Lumenal portion of the chain corresponds to 271–296 (SSITRMRGNRRNIDYVEDALIDDIDT).

The protein belongs to the MRL1/IGF2R family.

It localises to the golgi apparatus. Its subcellular location is the trans-Golgi network membrane. It is found in the endosome membrane. In Schizosaccharomyces pombe (strain 972 / ATCC 24843) (Fission yeast), this protein is Putative mannose 6-phosphate receptor-like protein C530.09c.